Here is a 231-residue protein sequence, read N- to C-terminus: Protein INCA1 (231 aa).

The interval 75 to 99 (SLHPLEGLPPPEKLWRRKRKKLHLE) is interaction with CCNA1 and CCNA1/CDK2 complex; essential for CDK2 inhibitory activity. A Nuclear localization signal motif is present at residues 90–95 (RRKRKK). Position 180 is a phosphothreonine (T180).

It belongs to the INCA family. As to quaternary structure, interacts with CCNA1. Identified in a complex with CCNA1 and CDK2. Interacts with ZNF16; the interaction inhibits INCA1 activity and induces the cell cycle process. Interacts with SPACA9. Interacts with CCNA2, CCNB1 and CCNE1. Interacts with the CCNA1/CDK2 complex. Interacts with ING5, DAZAP2, RNF26, USP15, SPOUT1, DPH7, TRIM26 and RAB5C. Post-translationally, phosphorylated when part of a complex with CCNA1 and CDK2.

The protein localises to the nucleus. Its subcellular location is the cytoplasm. Binds to CDK2-bound cyclins and inhibits the kinase activity of CDK2; binding to cyclins is critical for its function as CDK inhibitor. Inhibits cell growth and proliferation and may play a role in cell cycle control. Required for ING5-mediated regulation of S-phase progression, enhancement of Fas-induced apoptosis and inhibition of cell growth. The polypeptide is Protein INCA1 (Inca1) (Mus musculus (Mouse)).